The chain runs to 157 residues: 6,7-dimethyl-8-ribityllumazine synthase 1 (157 aa).

5-amino-6-(D-ribitylamino)uracil contacts are provided by residues Phe22, 53 to 55 (ALE), and 82 to 84 (TVI). 87–88 (ET) contacts (2S)-2-hydroxy-3-oxobutyl phosphate. The Proton donor role is filled by His90. Asn115 is a 5-amino-6-(D-ribitylamino)uracil binding site. Arg129 contacts (2S)-2-hydroxy-3-oxobutyl phosphate.

This sequence belongs to the DMRL synthase family.

The catalysed reaction is (2S)-2-hydroxy-3-oxobutyl phosphate + 5-amino-6-(D-ribitylamino)uracil = 6,7-dimethyl-8-(1-D-ribityl)lumazine + phosphate + 2 H2O + H(+). The protein operates within cofactor biosynthesis; riboflavin biosynthesis; riboflavin from 2-hydroxy-3-oxobutyl phosphate and 5-amino-6-(D-ribitylamino)uracil: step 1/2. Catalyzes the formation of 6,7-dimethyl-8-ribityllumazine by condensation of 5-amino-6-(D-ribitylamino)uracil with 3,4-dihydroxy-2-butanone 4-phosphate. This is the penultimate step in the biosynthesis of riboflavin. This Brucella suis biovar 1 (strain 1330) protein is 6,7-dimethyl-8-ribityllumazine synthase 1.